Reading from the N-terminus, the 133-residue chain is Profilin (133 aa).

Belongs to the profilin family.

Its function is as follows. More likely to influence phosphoinositide metabolism than actin assembly. This is Profilin from Camelus.